A 115-amino-acid chain; its full sequence is NAD(P)H-quinone oxidoreductase subunit M (115 aa).

The protein belongs to the complex I NdhM subunit family. As to quaternary structure, NDH-1 can be composed of about 15 different subunits; different subcomplexes with different compositions have been identified which probably have different functions.

The protein localises to the cellular thylakoid membrane. It catalyses the reaction a plastoquinone + NADH + (n+1) H(+)(in) = a plastoquinol + NAD(+) + n H(+)(out). It carries out the reaction a plastoquinone + NADPH + (n+1) H(+)(in) = a plastoquinol + NADP(+) + n H(+)(out). NDH-1 shuttles electrons from an unknown electron donor, via FMN and iron-sulfur (Fe-S) centers, to quinones in the respiratory and/or the photosynthetic chain. The immediate electron acceptor for the enzyme in this species is believed to be plastoquinone. Couples the redox reaction to proton translocation, and thus conserves the redox energy in a proton gradient. Cyanobacterial NDH-1 also plays a role in inorganic carbon-concentration. The sequence is that of NAD(P)H-quinone oxidoreductase subunit M from Prochlorococcus marinus (strain AS9601).